Consider the following 175-residue polypeptide: Ribosome maturation factor RimM (175 aa).

A PRC barrel domain is found at 98-175 (EGEYYWHQLE…EMRVDWDADF (78 aa)).

The protein belongs to the RimM family. As to quaternary structure, binds ribosomal protein uS19.

The protein localises to the cytoplasm. An accessory protein needed during the final step in the assembly of 30S ribosomal subunit, possibly for assembly of the head region. Essential for efficient processing of 16S rRNA. May be needed both before and after RbfA during the maturation of 16S rRNA. It has affinity for free ribosomal 30S subunits but not for 70S ribosomes. This Pseudomonas aeruginosa (strain UCBPP-PA14) protein is Ribosome maturation factor RimM.